Here is a 369-residue protein sequence, read N- to C-terminus: Ubiquinone biosynthesis protein COQ4, mitochondrial (369 aa).

Residues 1-35 (MLTSQKVSRVLLHSSFLKTPVSTQSRSFVFTTIAT) constitute a mitochondrion transit peptide. Zn(2+) is bound by residues His-212, Asp-213, His-216, and Glu-228. Low complexity predominate over residues 329–360 (AAAAATVTQRQRQQQRATATAANATSASSANV). Residues 329-369 (AAAAATVTQRQRQQQRATATAANATSASSANVKPSNTAGAM) form a disordered region.

Belongs to the COQ4 family. In terms of assembly, component of a multi-subunit COQ enzyme complex, composed of at least COQ3, COQ4, COQ5, COQ6, COQ7 and COQ9. Requires Zn(2+) as cofactor.

The protein localises to the mitochondrion inner membrane. The catalysed reaction is a 4-hydroxy-3-methoxy-5-(all-trans-polyprenyl)benzoate + H(+) = a 2-methoxy-6-(all-trans-polyprenyl)phenol + CO2. It participates in cofactor biosynthesis; ubiquinone biosynthesis. Its function is as follows. Lyase that catalyzes the C1-decarboxylation of 4-hydroxy-3-methoxy-5-(all-trans-polyprenyl)benzoic acid into 2-methoxy-6-(all-trans-polyprenyl)phenol during ubiquinone biosynthesis. The sequence is that of Ubiquinone biosynthesis protein COQ4, mitochondrial from Lodderomyces elongisporus (strain ATCC 11503 / CBS 2605 / JCM 1781 / NBRC 1676 / NRRL YB-4239) (Yeast).